Reading from the N-terminus, the 252-residue chain is 5'-nucleotidase SurE (252 aa).

A divalent metal cation contacts are provided by D8, D9, S40, and N92.

This sequence belongs to the SurE nucleotidase family. It depends on a divalent metal cation as a cofactor.

It localises to the cytoplasm. It catalyses the reaction a ribonucleoside 5'-phosphate + H2O = a ribonucleoside + phosphate. In terms of biological role, nucleotidase that shows phosphatase activity on nucleoside 5'-monophosphates. The protein is 5'-nucleotidase SurE of Mesorhizobium japonicum (strain LMG 29417 / CECT 9101 / MAFF 303099) (Mesorhizobium loti (strain MAFF 303099)).